The following is a 149-amino-acid chain: Chromophore lyase CpcS/CpeS homolog (149 aa).

It belongs to the CpcS/CpeS biliprotein lyase family.

It is found in the plastid. It localises to the chloroplast. Functionally, might function to covalently attach a chromophore to Cys residue(s) of phycobiliproteins. In Porphyra purpurea (Red seaweed), this protein is Chromophore lyase CpcS/CpeS homolog.